Consider the following 98-residue polypeptide: Protein S100-A13 (98 aa).

The region spanning 18 to 53 (TTFFTFAGREGRKGSLSVNEFKELVTQQLPHLLKDV) is the EF-hand domain. Positions 32, 37, 64, 66, 68, 70, and 75 each coordinate Ca(2+). Ser-32 carries the post-translational modification Phosphoserine.

This sequence belongs to the S-100 family. In terms of assembly, homodimer. Part of a copper-dependent multiprotein complex containing S100A13, FGF1 and SYT1. Interacts with FGF1 and SYT1. Interacts with IL1A.

The protein localises to the cytoplasm. Its subcellular location is the secreted. Its function is as follows. Plays a role in the export of proteins that lack a signal peptide and are secreted by an alternative pathway. Binds two calcium ions per subunit. Binds one copper ion. Binding of one copper ion does not interfere with calcium binding. Required for the copper-dependent stress-induced export of IL1A and FGF1. The calcium-free protein binds to lipid vesicles containing phosphatidylserine, but not to vesicles containing phosphatidylcholine. The chain is Protein S100-A13 (S100A13) from Bos taurus (Bovine).